We begin with the raw amino-acid sequence, 59 residues long: Large ribosomal subunit protein bL33 (59 aa).

The protein belongs to the bacterial ribosomal protein bL33 family.

This is Large ribosomal subunit protein bL33 from Borreliella afzelii (strain PKo) (Borrelia afzelii).